The sequence spans 398 residues: Type III polyketide synthase pspB (398 aa).

CoA-binding positions include Lys47 and 47–54; that span reads KLLQINRS. Catalysis depends on Cys152, which acts as the Nucleophile. 214-215 is a binding site for substrate; it reads SD. CoA contacts are provided by residues Leu267, Gly321, 321-324, and Ala324; that span reads GGEA.

This sequence belongs to the thiolase-like superfamily. Chalcone/stilbene synthases family. Homodimer.

The enzyme catalyses 11 malonyl-CoA + acetyl-CoA + S-adenosyl-L-methionine + 12 NADPH + 22 H(+) = soppiline B + S-adenosyl-L-homocysteine + 12 CO2 + 12 NADP(+) + 12 CoA + 8 H2O. It functions in the pathway secondary metabolite biosynthesis. In terms of biological role, type III polyketide synthase; part of the gene cluster that mediates the biosynthesis of the alkylresorcinols called soppilines. The biosynthesis starts with the HR-PKS pspA-catalyzed carbon chain assembly through nine chain elongation cycles, using acetyl CoA and malonyl CoA as a starter and extender units, respectively, to produce the polyketide soppiline A. In the first round, the KR, DH, and CMeT domains work to produce 2-methyl-2-butenyl thioester. In rounds 2 to 5, the KR, DH, and ER domains fully catalyze the reduction of the elongated beta-ketothioester, resulting in the insertion of eight methylene units. The unusual Z,E,Z-triene motif is likely constructed during rounds 6 to 8. Typically, the DH domain introduces a double bond at an alpha,beta-position of an elongated polyketide chain, with the dehydration of a beta-hydroxy group. The last extension cycle would be carried out with L-oriented beta-ketoreduction by the KR domain to produce beta-hydroxy carboxylic acid soppiline A. The type III PKS pspB intercepts the elongated polyketide chain at round 8 from the HR-PKS pspA, followed by a tri-keto extension and decarboxylative aldol cyclization to produce 1,3,5-trisubstituted alkylresorcinol soppiline B. Subsequently, the cytochrome P450 monooxygenase pspC catalyzes three-step oxidations at the C-4 methyl group to carboxylic acid to yield soppiline C. The sequence is that of Type III polyketide synthase pspB from Penicillium soppii.